Here is a 248-residue protein sequence, read N- to C-terminus: Coproheme decarboxylase (248 aa).

Fe-coproporphyrin III-binding positions include Arg130, 144–148 (YPMDK), His171, Gln184, and Ser222. Tyr144 is a catalytic residue.

This sequence belongs to the ChdC family. Type 1 subfamily. Requires Fe-coproporphyrin III as cofactor.

The enzyme catalyses Fe-coproporphyrin III + 2 H2O2 + 2 H(+) = heme b + 2 CO2 + 4 H2O. It carries out the reaction Fe-coproporphyrin III + H2O2 + H(+) = harderoheme III + CO2 + 2 H2O. The catalysed reaction is harderoheme III + H2O2 + H(+) = heme b + CO2 + 2 H2O. Its pathway is porphyrin-containing compound metabolism; protoheme biosynthesis. Functionally, involved in coproporphyrin-dependent heme b biosynthesis. Catalyzes the decarboxylation of Fe-coproporphyrin III (coproheme) to heme b (protoheme IX), the last step of the pathway. The reaction occurs in a stepwise manner with a three-propionate intermediate. In Geobacillus thermodenitrificans (strain NG80-2), this protein is Coproheme decarboxylase.